A 241-amino-acid chain; its full sequence is Uridylate kinase (241 aa).

An ATP-binding site is contributed by 15–18; sequence KLSG. The tract at residues 23–28 is involved in allosteric activation by GTP; that stretch reads GTEGFG. Residue Gly57 participates in UMP binding. Residues Gly58 and Arg62 each coordinate ATP. Residues Asp77 and 138–145 contribute to the UMP site; that span reads TGNPFFTT. ATP contacts are provided by Thr165, Tyr171, and Asp174.

The protein belongs to the UMP kinase family. In terms of assembly, homohexamer.

It localises to the cytoplasm. It catalyses the reaction UMP + ATP = UDP + ADP. It participates in pyrimidine metabolism; CTP biosynthesis via de novo pathway; UDP from UMP (UMPK route): step 1/1. Its activity is regulated as follows. Allosterically activated by GTP. Inhibited by UTP. Catalyzes the reversible phosphorylation of UMP to UDP. The protein is Uridylate kinase of Pectobacterium atrosepticum (strain SCRI 1043 / ATCC BAA-672) (Erwinia carotovora subsp. atroseptica).